We begin with the raw amino-acid sequence, 352 residues long: uncharacterized protein (352 aa).

An N-terminal signal peptide occupies residues 1 to 22 (MAIYLDKLKMPIIIGLIVLIIA).

This sequence belongs to the bacterial solute-binding protein 1 family. WtpA subfamily.

This is an uncharacterized protein from Staphylothermus marinus (strain ATCC 43588 / DSM 3639 / JCM 9404 / F1).